The chain runs to 301 residues: Probable alpha-L-glutamate ligase 2 (301 aa).

Positions Leu104 to Glu287 constitute an ATP-grasp domain. ATP-binding positions include Lys141, Glu178 to Tyr179, Asp187, and Arg211 to Asn213. 3 residues coordinate Mg(2+): Asp248, Glu260, and Asn262. Mn(2+) is bound by residues Asp248, Glu260, and Asn262.

The protein belongs to the RimK family. Mg(2+) serves as cofactor. The cofactor is Mn(2+).

This is Probable alpha-L-glutamate ligase 2 from Shewanella amazonensis (strain ATCC BAA-1098 / SB2B).